We begin with the raw amino-acid sequence, 373 residues long: Anhydro-N-acetylmuramic acid kinase (373 aa).

Position 12–19 (12–19 (GTSLDGVD)) interacts with ATP.

The protein belongs to the anhydro-N-acetylmuramic acid kinase family.

The catalysed reaction is 1,6-anhydro-N-acetyl-beta-muramate + ATP + H2O = N-acetyl-D-muramate 6-phosphate + ADP + H(+). It functions in the pathway amino-sugar metabolism; 1,6-anhydro-N-acetylmuramate degradation. The protein operates within cell wall biogenesis; peptidoglycan recycling. Its function is as follows. Catalyzes the specific phosphorylation of 1,6-anhydro-N-acetylmuramic acid (anhMurNAc) with the simultaneous cleavage of the 1,6-anhydro ring, generating MurNAc-6-P. Is required for the utilization of anhMurNAc either imported from the medium or derived from its own cell wall murein, and thus plays a role in cell wall recycling. This is Anhydro-N-acetylmuramic acid kinase from Salmonella gallinarum (strain 287/91 / NCTC 13346).